Reading from the N-terminus, the 938-residue chain is Glutamate receptor ionotropic, NMDA 1 (938 aa).

An N-terminal signal peptide occupies residues 1–18 (MSTMHLLTFALLFSCSFA). Over 19–559 (RAACDPKIVN…TLDSFMQPFQ (541 aa)) the chain is Extracellular. N-linked (GlcNAc...) asparagine glycosylation is found at N61, N203, N239, N276, N300, N350, N368, N440, N471, and N491. A disulfide bridge connects residues C79 and C308. 2 cysteine pairs are disulfide-bonded: C420-C454 and C436-C455. Glycine is bound by residues P516, T518, and R523. The chain crosses the membrane as a helical span at residues 560–580 (STLWLLVGLSVHVVAVMLYLL). Residues 581-602 (DRFSPFGRFKVNSEEEEEDALT) lie on the Cytoplasmic side of the membrane. Residues 603–624 (LSSAMWFSWGVLLNSGIGEGAP) constitute an intramembrane region (discontinuously helical). A pore-forming region spans residues 603–624 (LSSAMWFSWGVLLNSGIGEGAP). Topologically, residues 625-630 (RSFSAR) are cytoplasmic. A helical membrane pass occupies residues 631-647 (ILGMVWAGFAMIIVASY). At 648–812 (TANLAAFLVL…NAPATLTFEN (165 aa)) the chain is on the extracellular side. N674 carries N-linked (GlcNAc...) asparagine glycosylation. Residues S688 and D732 each coordinate glycine. An intrachain disulfide couples C744 to C798. N771 carries an N-linked (GlcNAc...) asparagine glycan. The helical transmembrane segment at 813–833 (MAGVFMLVAGGIVAGIFLIFI) threads the bilayer. Topologically, residues 834–938 (EIAYKRHKDA…LQLCSRHRES (105 aa)) are cytoplasmic. K877 carries the phosphoserine modification. 4 positions are modified to phosphoserine; by PKC: S889, S890, S896, and S897. Residues 889-938 (SSFKRRRSSKDTSTGGGRGALQNQKDTVLPRRAIEREEGQLQLCSRHRES) form a disordered region. Phosphoserine is present on K898. Residues 916-927 (VLPRRAIEREEG) show a composition bias toward basic and acidic residues.

It belongs to the glutamate-gated ion channel (TC 1.A.10.1) family. NR1/GRIN1 subfamily. In terms of assembly, heterotetramer; the NMDAR subunits are modular and harbor tiered domains that function in concert to regulate opening and closing of the cation-selective ion channel pore. Forms heterotetrameric channels composed of two GluN1/zeta subunits (GRIN1), and two identical GluN2/epsilon subunits (GRIN2A, GRIN2B, GRIN2C or GRIN2D) or GluN3 subunits (GRIN3A or GRIN3B) (in vitro). Can also form heterotetrameric channels that contain at least two GluN1 subunits and at least two different GluN2 subunits (or a combination of one GluN2 and one GluN3 subunits) (in vitro). In vivo, the subunit composition may vary in function of the expression levels of the different subunits. Found in a complex with GRIN2A or GRIN2B, GRIN3A and PPP2CB. Found in a complex with GRIN2A or GRIN2B and GRIN3B;. Interacts with SNX27 (via PDZ domain); the interaction is required for recycling to the plasma membrane when endocytosed and prevent degradation in lysosomes. Interacts with DLG4 and MPDZ. Interacts with LRFN1 and LRFN2. Interacts with MYZAP. Found in a complex with DLG4 and PRR7. Found in a complex with GRIN2B and PRR7. Interacts with PRR7; the interaction is reduced following NMDA receptor activity. NMDA is probably regulated by C-terminal phosphorylation of an isoform of NR1 by PKC. Dephosphorylated on Ser-897 probably by protein phosphatase 2A (PPP2CB). Its phosphorylated state is influenced by the formation of the NMDAR-PPP2CB complex and the NMDAR channel activity. As to expression, detected throughout the brain, in brain cortex, cerebellum, thalamus and olfactory bulb.

The protein localises to the cell membrane. It localises to the postsynaptic cell membrane. It is found in the synaptic cell membrane. Its subcellular location is the postsynaptic density membrane. It carries out the reaction Ca(2+)(in) = Ca(2+)(out). The catalysed reaction is Na(+)(in) = Na(+)(out). The enzyme catalyses K(+)(in) = K(+)(out). With respect to regulation, NMDA glutamate receptor activity is potentiated by Zn2(+) in a dose-dependent fashion. The potentiating effect of Zn2(+) is at submicromolar concentrations and its inhibitory action is at high micromolar to millimolar concentrations. Excitatory glycine receptors are inhibited by D-serine at 100uM. Functionally, component of N-methyl-D-aspartate (NMDA) receptors (NMDARs) that function as heterotetrameric, ligand-gated cation channels with high calcium permeability and voltage-dependent block by Mg(2+). NMDARs participate in synaptic plasticity for learning and memory formation by contributing to the long-term potentiation (LTP). Channel activation requires binding of the neurotransmitter L-glutamate to the GluN2 subunit, glycine or D-serine binding to the GluN1 subunit, plus membrane depolarization to eliminate channel inhibition by Mg(2+). NMDARs mediate simultaneously the potasium efflux and the influx of calcium and sodium. Each GluN2 or GluN3 subunit confers differential attributes to channel properties, including activation, deactivation and desensitization kinetics, pH sensitivity, Ca2(+) permeability, and binding to allosteric modulators. Forms excitatory glycinergic receptor complexes with GluN3 alone which are activated by glycine binding to the GluN1 and GluN3 subunits. The polypeptide is Glutamate receptor ionotropic, NMDA 1 (Rattus norvegicus (Rat)).